The primary structure comprises 148 residues: Large ribosomal subunit protein uL13 (148 aa).

It belongs to the universal ribosomal protein uL13 family. In terms of assembly, part of the 50S ribosomal subunit.

Its function is as follows. This protein is one of the early assembly proteins of the 50S ribosomal subunit, although it is not seen to bind rRNA by itself. It is important during the early stages of 50S assembly. The protein is Large ribosomal subunit protein uL13 of Lacticaseibacillus casei (strain BL23) (Lactobacillus casei).